The primary structure comprises 341 residues: L-threonine 3-dehydrogenase (341 aa).

Position 38 (cysteine 38) interacts with Zn(2+). Catalysis depends on charge relay system residues threonine 40 and histidine 43. 6 residues coordinate Zn(2+): histidine 63, glutamate 64, cysteine 93, cysteine 96, cysteine 99, and cysteine 107. NAD(+) is bound by residues isoleucine 175, aspartate 195, arginine 200, 262-264, and 286-287; these read LGI and IY.

Belongs to the zinc-containing alcohol dehydrogenase family. In terms of assembly, homotetramer. Zn(2+) serves as cofactor.

It is found in the cytoplasm. The catalysed reaction is L-threonine + NAD(+) = (2S)-2-amino-3-oxobutanoate + NADH + H(+). It participates in amino-acid degradation; L-threonine degradation via oxydo-reductase pathway; glycine from L-threonine: step 1/2. Its function is as follows. Catalyzes the NAD(+)-dependent oxidation of L-threonine to 2-amino-3-ketobutyrate. This Escherichia coli O17:K52:H18 (strain UMN026 / ExPEC) protein is L-threonine 3-dehydrogenase.